The primary structure comprises 257 residues: Imidazole glycerol phosphate synthase subunit HisF (257 aa).

Residues aspartate 11 and aspartate 130 contribute to the active site.

Belongs to the HisA/HisF family. Heterodimer of HisH and HisF.

It localises to the cytoplasm. The catalysed reaction is 5-[(5-phospho-1-deoxy-D-ribulos-1-ylimino)methylamino]-1-(5-phospho-beta-D-ribosyl)imidazole-4-carboxamide + L-glutamine = D-erythro-1-(imidazol-4-yl)glycerol 3-phosphate + 5-amino-1-(5-phospho-beta-D-ribosyl)imidazole-4-carboxamide + L-glutamate + H(+). Its pathway is amino-acid biosynthesis; L-histidine biosynthesis; L-histidine from 5-phospho-alpha-D-ribose 1-diphosphate: step 5/9. Its function is as follows. IGPS catalyzes the conversion of PRFAR and glutamine to IGP, AICAR and glutamate. The HisF subunit catalyzes the cyclization activity that produces IGP and AICAR from PRFAR using the ammonia provided by the HisH subunit. This is Imidazole glycerol phosphate synthase subunit HisF from Aliivibrio fischeri (strain MJ11) (Vibrio fischeri).